We begin with the raw amino-acid sequence, 185 residues long: Threonylcarbamoyl-AMP synthase (185 aa).

The YrdC-like domain occupies 4 to 185 (DWRVQQVARV…LRSGEVIRPA (182 aa)).

It belongs to the SUA5 family. TsaC subfamily.

It localises to the cytoplasm. The enzyme catalyses L-threonine + hydrogencarbonate + ATP = L-threonylcarbamoyladenylate + diphosphate + H2O. In terms of biological role, required for the formation of a threonylcarbamoyl group on adenosine at position 37 (t(6)A37) in tRNAs that read codons beginning with adenine. Catalyzes the conversion of L-threonine, HCO(3)(-)/CO(2) and ATP to give threonylcarbamoyl-AMP (TC-AMP) as the acyladenylate intermediate, with the release of diphosphate. The chain is Threonylcarbamoyl-AMP synthase from Stutzerimonas stutzeri (strain A1501) (Pseudomonas stutzeri).